The following is a 20-amino-acid chain: Truncated non-structural protein of 4.9 kDa (20 aa).

It belongs to the coronaviruses ns4.9 protein family.

This chain is Truncated non-structural protein of 4.9 kDa, found in Sus scrofa (Pig).